Consider the following 634-residue polypeptide: Beta-ketoacyl-[acyl-carrier-protein] synthase FabY (634 aa).

One can recognise a Ketosynthase family 3 (KS3) domain in the interval 78 to 546 (ERIFASTLVR…GNNASGVVLS (469 aa)). Residues C281, H434, and H472 each act as for beta-ketoacyl synthase activity in the active site.

Belongs to the thiolase-like superfamily. Beta-ketoacyl-ACP synthases family. Homodimer.

The enzyme catalyses malonyl-[ACP] + acetyl-CoA + H(+) = 3-oxobutanoyl-[ACP] + CO2 + CoA. Its pathway is lipid metabolism; fatty acid biosynthesis. Functionally, involved in the initiation of the fatty acid biosynthesis. Catalyzes the condensation of acetyl coenzyme A (acetyl-CoA) with malonyl-acyl carrier protein (ACP) to make the fatty acid synthesis (FAS) primer beta-acetoacetyl-ACP. It can also use short-chain acyl-CoA as substrates, including butyryl-CoA, and hexanoyl-CoA, but does not use any of the longer chain acyl-CoA substrates. This is Beta-ketoacyl-[acyl-carrier-protein] synthase FabY (fabY) from Pseudomonas aeruginosa (strain ATCC 15692 / DSM 22644 / CIP 104116 / JCM 14847 / LMG 12228 / 1C / PRS 101 / PAO1).